We begin with the raw amino-acid sequence, 439 residues long: Rho GTPase-activating protein 1 (439 aa).

M1 carries the N-acetylmethionine modification. Basic and acidic residues predominate over residues 28–48; it reads IDEKNWPSDEMPDFPKSDDSK. The disordered stretch occupies residues 28 to 52; that stretch reads IDEKNWPSDEMPDFPKSDDSKSSSP. Phosphoserine occurs at positions 44, 47, 50, and 51. Positions 63–218 constitute a CRAL-TRIO domain; it reads PYYDIARHQI…QVLKYDDFLK (156 aa). Residue Y65 is modified to Phosphotyrosine. K80 is modified (N6-acetyllysine). Positions 228-238 match the SH3-binding motif; the sequence is PKPMPPRPPLP. Residues 244-431 enclose the Rho-GAP domain; it reads VSLQHLQEKN…FLLDHQGELF (188 aa).

As to quaternary structure, found in a complex with XPO7, EIF4A1, ARHGAP1, VPS26A, VPS29, VPS35 and SFN. Interacts with BNIPL. In terms of tissue distribution, ubiquitous.

The protein resides in the cytoplasm. Its function is as follows. GTPase activator for the Rho, Rac and Cdc42 proteins, converting them to the putatively inactive GDP-bound state. Cdc42 seems to be the preferred substrate. This is Rho GTPase-activating protein 1 (ARHGAP1) from Homo sapiens (Human).